We begin with the raw amino-acid sequence, 137 residues long: Small ribosomal subunit protein uS13 (137 aa).

A disordered region spans residues 114–137 (VTQKNARTRKGPRKTIMAKKDKGK). Positions 119-130 (ARTRKGPRKTIM) are enriched in basic residues.

This sequence belongs to the universal ribosomal protein uS13 family. Part of the 30S ribosomal subunit. Forms a loose heterodimer with protein S19. Forms two bridges to the 50S subunit in the 70S ribosome.

In terms of biological role, located at the top of the head of the 30S subunit, it contacts several helices of the 16S rRNA. In the 70S ribosome it contacts the 23S rRNA (bridge B1a) and protein L5 of the 50S subunit (bridge B1b), connecting the 2 subunits; these bridges are implicated in subunit movement. Contacts the tRNAs in the A and P-sites. This is Small ribosomal subunit protein uS13 from Mesomycoplasma hyopneumoniae (strain 232) (Mycoplasma hyopneumoniae).